We begin with the raw amino-acid sequence, 792 residues long: G-type lectin S-receptor-like serine/threonine-protein kinase At1g61440 (792 aa).

Residues Met1–Ala17 form the signal peptide. The Bulb-type lectin domain occupies Glu18–Phe137. Residues Glu18 to Thr419 lie on the Extracellular side of the membrane. 3 N-linked (GlcNAc...) asparagine glycosylation sites follow: Asn46, Asn127, and Asn229. The EGF-like; atypical domain occupies Pro271–Glu307. 2 disulfide bridges follow: Cys275–Cys287 and Cys281–Cys295. N-linked (GlcNAc...) asparagine glycans are attached at residues Asn313, Asn329, and Asn368. Residues Cys326–His408 enclose the PAN domain. Intrachain disulfides connect Cys361–Cys382 and Cys365–Cys371. The helical transmembrane segment at Ile420–Phe440 threads the bilayer. Over Trp441–Arg792 the chain is Cytoplasmic. In terms of domain architecture, Protein kinase spans Phe478–Phe763. ATP contacts are provided by residues Leu484–Val492 and Lys506. A phosphoserine mark is found at Ser512 and Ser527. Residues Arg567–Ile584 are caM-binding. Catalysis depends on Asp603, which acts as the Proton acceptor. 2 positions are modified to phosphoserine: Ser607 and Ser620. At Thr637 the chain carries Phosphothreonine. Ser680 and Ser774 each carry phosphoserine.

It belongs to the protein kinase superfamily. Ser/Thr protein kinase family.

It is found in the cell membrane. The catalysed reaction is L-seryl-[protein] + ATP = O-phospho-L-seryl-[protein] + ADP + H(+). It catalyses the reaction L-threonyl-[protein] + ATP = O-phospho-L-threonyl-[protein] + ADP + H(+). In Arabidopsis thaliana (Mouse-ear cress), this protein is G-type lectin S-receptor-like serine/threonine-protein kinase At1g61440.